The chain runs to 393 residues: uncharacterized protein (393 aa).

8 helical membrane-spanning segments follow: residues Ile15 to Phe35, Trp56 to Ile76, Phe86 to Val106, Ala131 to Trp151, Leu176 to Phe196, Leu253 to Ile273, Leu289 to Ala309, and Val349 to Trp369.

It localises to the cell membrane. This is an uncharacterized protein from Mycoplasma genitalium (strain ATCC 33530 / DSM 19775 / NCTC 10195 / G37) (Mycoplasmoides genitalium).